A 33-amino-acid polypeptide reads, in one-letter code: Cyanophlyctin-beta (33 aa).

The cysteines at positions 27 and 33 are disulfide-linked.

Expressed by the skin glands.

The protein resides in the secreted. Its function is as follows. Antimicrobial peptide active against E.coli (MIC=5 uM), K.pneumoniae (MIC=10 uM), B.cereus (MIC=7 uM) and S.aureus (MIC=12 uM). Has very little hemolytic activity. The polypeptide is Cyanophlyctin-beta (Euphlyctis cyanophlyctis (Skittering frog)).